Reading from the N-terminus, the 75-residue chain is Lividin-3 (75 aa).

Positions 1-22 (MFTLKKSLLLLFFLGTISLSLC) are cleaved as a signal peptide. The propeptide occupies 23-40 (EEERDADEDEGEMTEEEV). C69 and C75 are joined by a disulfide.

Expressed by the skin glands.

It is found in the secreted. Its function is as follows. Antimicrobial peptide. The sequence is that of Lividin-3 from Odorrana livida (Green mountain frog).